The chain runs to 216 residues: Peroxiredoxin (216 aa).

Positions 2-158 constitute a Thioredoxin domain; sequence VVIGEKFPEV…ILRLVKALKI (157 aa). Cysteine 46 (cysteine sulfenic acid (-SOH) intermediate) is an active-site residue. Arginine 121 serves as a coordination point for substrate. Residues cysteine 205 and cysteine 211 are joined by a disulfide bond.

It belongs to the peroxiredoxin family. Prx6 subfamily. Homodecamer. Pentamer of dimers that assemble into a ring structure.

Its subcellular location is the cytoplasm. The catalysed reaction is a hydroperoxide + [thioredoxin]-dithiol = an alcohol + [thioredoxin]-disulfide + H2O. Thiol-specific peroxidase that catalyzes the reduction of hydrogen peroxide and organic hydroperoxides to water and alcohols, respectively. Plays a role in cell protection against oxidative stress by detoxifying peroxides. This is Peroxiredoxin (ahpC) from Pyrococcus horikoshii (strain ATCC 700860 / DSM 12428 / JCM 9974 / NBRC 100139 / OT-3).